The primary structure comprises 614 residues: MQNYPLLSLINSPEDLRLLSKEQLPQICQELRAYLLESVSQSSGHLASGLGTVELTVALHYVYKTPFDQLIWDVGHQAYPHKILTGRRDQMSTIRQKNGIHPFPWREESEFDVLSVGHSSTSISAGLGIAVAAQRENAGRKTVCVIGDGAITAGMAFEAMNHAGALHTDMLVILNDNEMSISENVGALNNHLARLLTGSFYSSIREGGKKILSGMPPIKEFVKKTEEHVKGFVSPVGTMFEQLGFNYIGPIDGHNIEELISTLKNMRALKGPQFLHIMTKKGKGYAPAEKDPIGFHGVPKFDHLSGQLPKSNTTPTYSKIFGDWLCEMAENDPKLIGITPAMREGSGMVEFSNRFPQQYFDVAIAEQHAVTFAAGLAIGGYKPVVAIYSTFLQRAYDQVIHDVAIQNLPVLFAIDRAGVVGADGQTHQGAFDISFLRCIPNMVIMTPSDENECRQMLYTGYKLNQPAAVRYPRGNAIGVELTPLTMLALGKSNLIREGEKIAILNFGTLLPTAINVAEKLNATVIDMRFVKPIDVERIHQIAQTHDLIVTLEENVIQGGAGSAVAEVLHSQQHQTKLLQLGLPDFFIPQGTQQEILADLHLDEAGIETQIKNFL.

Residues H76 and 117–119 (GHS) contribute to the thiamine diphosphate site. Residue D148 coordinates Mg(2+). Residues 149 to 150 (GA), N177, Y285, and E366 each bind thiamine diphosphate. Residue N177 coordinates Mg(2+).

Belongs to the transketolase family. DXPS subfamily. In terms of assembly, homodimer. Mg(2+) serves as cofactor. Requires thiamine diphosphate as cofactor.

It catalyses the reaction D-glyceraldehyde 3-phosphate + pyruvate + H(+) = 1-deoxy-D-xylulose 5-phosphate + CO2. It participates in metabolic intermediate biosynthesis; 1-deoxy-D-xylulose 5-phosphate biosynthesis; 1-deoxy-D-xylulose 5-phosphate from D-glyceraldehyde 3-phosphate and pyruvate: step 1/1. Functionally, catalyzes the acyloin condensation reaction between C atoms 2 and 3 of pyruvate and glyceraldehyde 3-phosphate to yield 1-deoxy-D-xylulose-5-phosphate (DXP). The protein is 1-deoxy-D-xylulose-5-phosphate synthase of Pasteurella multocida (strain Pm70).